The chain runs to 95 residues: Protein TusB (95 aa).

This sequence belongs to the DsrH/TusB family. Heterohexamer, formed by a dimer of trimers. The hexameric TusBCD complex contains 2 copies each of TusB, TusC and TusD. The TusBCD complex interacts with TusE.

It localises to the cytoplasm. Its function is as follows. Part of a sulfur-relay system required for 2-thiolation of 5-methylaminomethyl-2-thiouridine (mnm(5)s(2)U) at tRNA wobble positions. This Salmonella dublin (strain CT_02021853) protein is Protein TusB.